The chain runs to 241 residues: Ribosomal RNA large subunit methyltransferase E (241 aa).

5 residues coordinate S-adenosyl-L-methionine: Gly88, Trp90, Asp111, Asp127, and Asp151. Catalysis depends on Lys191, which acts as the Proton acceptor.

Belongs to the class I-like SAM-binding methyltransferase superfamily. RNA methyltransferase RlmE family.

The protein resides in the cytoplasm. The enzyme catalyses uridine(2552) in 23S rRNA + S-adenosyl-L-methionine = 2'-O-methyluridine(2552) in 23S rRNA + S-adenosyl-L-homocysteine + H(+). Its function is as follows. Specifically methylates the uridine in position 2552 of 23S rRNA at the 2'-O position of the ribose in the fully assembled 50S ribosomal subunit. The chain is Ribosomal RNA large subunit methyltransferase E from Bartonella quintana (strain Toulouse) (Rochalimaea quintana).